A 90-amino-acid polypeptide reads, in one-letter code: uncharacterized protein (90 aa).

The interval 1–26 (MFKRSVSRLFCAPAPAPAPRKQPGGR) is disordered. The stretch at 33–66 (NLNQSVKKQLNHLEVLERIKKQRKEQKNNRNQVD) forms a coiled coil.

This is an uncharacterized protein from Dictyostelium discoideum (Social amoeba).